A 93-amino-acid chain; its full sequence is AYKVTLKTPDGDITFDVEPGERLIDIASEKADLPLSCQAGACSTCLGKIVSGTVDQSEGSFLDDEQIEQGYVLTCIAIPESDVVIETHKEDEL.

One can recognise a 2Fe-2S ferredoxin-type domain in the interval 2–91 (YKVTLKTPDG…DVVIETHKED (90 aa)). 4 residues coordinate [2Fe-2S] cluster: cysteine 37, cysteine 42, cysteine 45, and cysteine 75.

Belongs to the 2Fe2S plant-type ferredoxin family. [2Fe-2S] cluster is required as a cofactor.

Its subcellular location is the plastid. It is found in the chloroplast. Ferredoxins are iron-sulfur proteins that transfer electrons in a wide variety of metabolic reactions. This Equisetum telmateia (Great horsetail) protein is Ferredoxin-2.